The primary structure comprises 495 residues: UDP-N-acetylmuramoyl-L-alanyl-D-glutamate--2,6-diaminopimelate ligase (495 aa).

Residues L27, S29, and 44–46 (HQA) each bind UDP-N-acetyl-alpha-D-muramoyl-L-alanyl-D-glutamate. 116-122 (GTNGKTT) lines the ATP pocket. UDP-N-acetyl-alpha-D-muramoyl-L-alanyl-D-glutamate contacts are provided by residues N157, 158 to 159 (TT), S185, Q191, and R193. An N6-carboxylysine modification is found at K225. Residues R390, 414–417 (DNPR), G465, and E469 each bind meso-2,6-diaminopimelate. The Meso-diaminopimelate recognition motif motif lies at 414-417 (DNPR).

Belongs to the MurCDEF family. MurE subfamily. Requires Mg(2+) as cofactor. Post-translationally, carboxylation is probably crucial for Mg(2+) binding and, consequently, for the gamma-phosphate positioning of ATP.

It is found in the cytoplasm. The enzyme catalyses UDP-N-acetyl-alpha-D-muramoyl-L-alanyl-D-glutamate + meso-2,6-diaminopimelate + ATP = UDP-N-acetyl-alpha-D-muramoyl-L-alanyl-gamma-D-glutamyl-meso-2,6-diaminopimelate + ADP + phosphate + H(+). It functions in the pathway cell wall biogenesis; peptidoglycan biosynthesis. Its function is as follows. Catalyzes the addition of meso-diaminopimelic acid to the nucleotide precursor UDP-N-acetylmuramoyl-L-alanyl-D-glutamate (UMAG) in the biosynthesis of bacterial cell-wall peptidoglycan. The sequence is that of UDP-N-acetylmuramoyl-L-alanyl-D-glutamate--2,6-diaminopimelate ligase from Shigella flexneri.